We begin with the raw amino-acid sequence, 308 residues long: Porphobilinogen deaminase (308 aa).

Cys-241 bears the S-(dipyrrolylmethanemethyl)cysteine mark.

It belongs to the HMBS family. Monomer. It depends on dipyrromethane as a cofactor.

It carries out the reaction 4 porphobilinogen + H2O = hydroxymethylbilane + 4 NH4(+). It functions in the pathway porphyrin-containing compound metabolism; protoporphyrin-IX biosynthesis; coproporphyrinogen-III from 5-aminolevulinate: step 2/4. Functionally, tetrapolymerization of the monopyrrole PBG into the hydroxymethylbilane pre-uroporphyrinogen in several discrete steps. The chain is Porphobilinogen deaminase from Staphylococcus saprophyticus subsp. saprophyticus (strain ATCC 15305 / DSM 20229 / NCIMB 8711 / NCTC 7292 / S-41).